A 670-amino-acid polypeptide reads, in one-letter code: Serine/threonine-rich protein adg2 (670 aa).

A signal peptide spans 1-19; that stretch reads MRRLTISGLLISLAKLCAG. N-linked (GlcNAc...) asparagine glycosylation is found at Asn-77, Asn-159, Asn-204, Asn-224, Asn-274, Asn-297, Asn-327, Asn-351, Asn-370, Asn-381, Asn-405, Asn-424, Asn-435, Asn-459, Asn-478, Asn-489, and Asn-513. Residues 526-651 are disordered; it reads GSVSSFSSSP…MSLPPSAGSS (126 aa).

Its subcellular location is the secreted. It is found in the endoplasmic reticulum. The sequence is that of Serine/threonine-rich protein adg2 (adg2) from Schizosaccharomyces pombe (strain 972 / ATCC 24843) (Fission yeast).